We begin with the raw amino-acid sequence, 439 residues long: GTPase Obg (439 aa).

The 159-residue stretch at 1–159 (MAFVDQAEIE…RKLKLELKVL (159 aa)) folds into the Obg domain. The 177-residue stretch at 160–336 (ADVGLVGFPS…LMRLTADLLA (177 aa)) folds into the OBG-type G domain. Residues 166–173 (GFPSAGKS), 191–195 (FTTLS), 213–216 (DLPG), 283–286 (TKMD), and 317–319 (SAL) each bind GTP. Mg(2+) is bound by residues serine 173 and threonine 193. The 82-residue stretch at 358–439 (DFKPEQHNFT…NSDFVFEFSD (82 aa)) folds into the OCT domain.

The protein belongs to the TRAFAC class OBG-HflX-like GTPase superfamily. OBG GTPase family. In terms of assembly, monomer. Mg(2+) is required as a cofactor.

The protein resides in the cytoplasm. Functionally, an essential GTPase which binds GTP, GDP and possibly (p)ppGpp with moderate affinity, with high nucleotide exchange rates and a fairly low GTP hydrolysis rate. Plays a role in control of the cell cycle, stress response, ribosome biogenesis and in those bacteria that undergo differentiation, in morphogenesis control. This Leuconostoc citreum (strain KM20) protein is GTPase Obg.